The chain runs to 1037 residues: Multidrug resistance protein MdtF (1037 aa).

Over 1–9 (MANYFIDRP) the chain is Cytoplasmic. Residues 10-28 (VFAWVLAIIMMLAGGLAIM) traverse the membrane as a helical segment. At 29–339 (NLPVAQYPQI…TPFIEISIQE (311 aa)) the chain is on the periplasmic side. A helical membrane pass occupies residues 340 to 359 (VFKTLVEAIILVFLVMYLFL). Topologically, residues 360-365 (QNFRAT) are cytoplasmic. Residues 366–385 (IIPTIAVPVVILGTFAILSA) form a helical membrane-spanning segment. The Periplasmic portion of the chain corresponds to 386 to 391 (VGFTIN). The chain crosses the membrane as a helical span at residues 392 to 413 (TLTMFGMVLAIGLLVDDAIVVV). The Cytoplasmic portion of the chain corresponds to 414–441 (ENVERVIAEDKLPPKEATHKSMGQIQRA). Residues 442 to 460 (LVGIAVVLSAVFMPMAFMS) traverse the membrane as a helical segment. The Periplasmic segment spans residues 461 to 473 (GATGEIYRQFSIT). A helical transmembrane segment spans residues 474–496 (LISSMLLSVFVAMSLTPALCATI). Residues 497-536 (LKAAPEGGHKPNALFARFNTLFEKSTQHYTDSTRSLLRCT) are Cytoplasmic-facing. Residues 537-555 (GRYMVVYLLICAGMAVLFL) form a helical membrane-spanning segment. Residues 556–870 (RTPTSFLPEE…SYQEALSSNQ (315 aa)) are Periplasmic-facing. A helical membrane pass occupies residues 871-890 (APALYAISLVVVFLALAALY). Topologically, residues 891–896 (ESWSIP) are cytoplasmic. Residues 897–916 (FSVMLVVPLGVVGALLATDL) traverse the membrane as a helical segment. Over 917–922 (RGLSND) the chain is Periplasmic. The helical transmembrane segment at 923-944 (VYFQVGLLTTIGLSAKNAILIV) threads the bilayer. Residues 945-972 (EFAVEMMQKEGKTPIEAIIEAARMRLRP) are Cytoplasmic-facing. A helical transmembrane segment spans residues 973–991 (ILMTSLAFILGVLPLVISH). Residues 992–1004 (GAGSGAQNAVGTG) lie on the Periplasmic side of the membrane. The helical transmembrane segment at 1005–1027 (VMGGMFAATVLAIYFVPVFFVVV) threads the bilayer. Topologically, residues 1028 to 1037 (EHLFARFKKA) are cytoplasmic.

Belongs to the resistance-nodulation-cell division (RND) (TC 2.A.6) family. As to quaternary structure, homotrimer. Part of the tripartite efflux system MdtEF-TolC, which is composed of an inner membrane transporter, MdtF, a membrane fusion protein, MdtE, and an outer membrane component, TolC. The complex forms a large protein conduit and can translocate molecules across both the inner and outer membranes.

The protein localises to the cell inner membrane. In terms of biological role, part of the tripartite efflux system MdtEF-TolC, which confers resistance to compounds such as rhodamine 6G, erythromycin, doxorubicin, ethidium bromide, TPP, SDS, deoxycholate, crystal violet and benzalkonium. The protein is Multidrug resistance protein MdtF (mdtF) of Escherichia coli (strain K12).